A 145-amino-acid polypeptide reads, in one-letter code: Large ribosomal subunit protein uL13 (145 aa).

The protein belongs to the universal ribosomal protein uL13 family. Part of the 50S ribosomal subunit.

This protein is one of the early assembly proteins of the 50S ribosomal subunit, although it is not seen to bind rRNA by itself. It is important during the early stages of 50S assembly. This chain is Large ribosomal subunit protein uL13, found in Bacillus pumilus (strain SAFR-032).